Reading from the N-terminus, the 459-residue chain is ATP-dependent 6-phosphofructokinase (459 aa).

Residues G89, 154–155 (RG), and 179–182 (GDGG) each bind ATP. D180 is a Mg(2+) binding site. Substrate-binding positions include 208–210 (TID), 253–255 (MGR), E309, and 368–371 (YAIR). The active-site Proton acceptor is the D210.

Belongs to the phosphofructokinase type A (PFKA) family. PPi-dependent PFK group II subfamily. Atypical ATP-dependent clade 'X' sub-subfamily. As to quaternary structure, homodimer. Requires Mg(2+) as cofactor.

It localises to the cytoplasm. It catalyses the reaction beta-D-fructose 6-phosphate + ATP = beta-D-fructose 1,6-bisphosphate + ADP + H(+). It functions in the pathway carbohydrate degradation; glycolysis; D-glyceraldehyde 3-phosphate and glycerone phosphate from D-glucose: step 3/4. AMP causes 20-40% inhibition and diphosphate causes 20-50% inhibition. ADP, citrate, PEP and FBP have no effect. In terms of biological role, catalyzes the phosphorylation of D-fructose 6-phosphate to fructose 1,6-bisphosphate by ATP, the first committing step of glycolysis. In Amycolatopsis methanolica, this protein is ATP-dependent 6-phosphofructokinase.